The sequence spans 276 residues: Aurora kinase C (276 aa).

The Protein kinase domain occupies 16 to 266 (FEIGRPLGRG…LAQVLKHPWV (251 aa)). Residues 22-30 (LGRGKFGRV) and Lys45 each bind ATP. Asp139 (proton acceptor) is an active-site residue. Position 171 is a phosphothreonine; by PKA (Thr171).

It belongs to the protein kinase superfamily. Ser/Thr protein kinase family. Aurora subfamily. As to quaternary structure, component of the chromosomal passenger complex (CPC) composed of at least BIRC5/survivin, CDCA8/borealin, INCENP, AURKB or AURKC; predominantly independent AURKB- and AURKC-containing complexes exist; in the complex interacts directly with BIRC5/survivin and INCENP. Interacts with TACC1. In terms of tissue distribution, expressed only in testis.

It localises to the nucleus. The protein resides in the chromosome. Its subcellular location is the centromere. The protein localises to the cytoplasm. It is found in the cytoskeleton. It localises to the spindle. It carries out the reaction L-seryl-[protein] + ATP = O-phospho-L-seryl-[protein] + ADP + H(+). It catalyses the reaction L-threonyl-[protein] + ATP = O-phospho-L-threonyl-[protein] + ADP + H(+). With respect to regulation, okadaic acid, an inhibitor of protein phosphatase 1 (PP1), protein phosphatase 2A (PP2A) and protein phosphatase 5 (PP5), increases AURKC activity. AURKC is also stabilized through its interaction with INCENP, which also acts as an activator. Functionally, serine/threonine-protein kinase component of the chromosomal passenger complex (CPC), a complex that acts as a key regulator of mitosis. The CPC complex has essential functions at the centromere in ensuring correct chromosome alignment and segregation and is required for chromatin-induced microtubule stabilization and spindle assembly. Also plays a role in meiosis and more particularly in spermatogenesis. Has redundant cellular functions with AURKB and can rescue an AURKB knockdown. Like AURKB, AURKC phosphorylates histone H3 at 'Ser-10' and 'Ser-28'. AURKC phosphorylates the CPC complex subunits BIRC5/survivin and INCENP leading to increased AURKC activity. Phosphorylates TACC1, another protein involved in cell division, at 'Ser-228'. The polypeptide is Aurora kinase C (Aurkc) (Mus musculus (Mouse)).